Consider the following 1125-residue polypeptide: ATP-dependent DNA helicase Hel308 (1125 aa).

Positions 1–29 (MKVDELPIDERIKRVIKERGIEELYPPQA) match the Q motif motif. Residues Q28 and 46-53 (IPTASGKT) contribute to the ATP site. The Helicase ATP-binding domain occupies 33–197 (KSGVLEGKNL…WLDASLVVSD (165 aa)). The DEAH box motif lies at 145 to 148 (DEVH). One can recognise a Helicase C-terminal domain in the interval 226–440 (NWESLVLDAV…ELKERLESET (215 aa)). Positions 500 to 640 (LIGLWIAEGS…LQLLVASLGY (141 aa)) constitute a DOD-type homing endonuclease domain.

The protein belongs to the helicase family. Hel308 subfamily. Monomer. This protein undergoes a protein self splicing that involves a post-translational excision of the intervening region (intein) followed by peptide ligation.

It carries out the reaction Couples ATP hydrolysis with the unwinding of duplex DNA by translocating in the 3'-5' direction.. The catalysed reaction is ATP + H2O = ADP + phosphate + H(+). In terms of biological role, DNA-dependent ATPase and 3'-5' DNA helicase that may be involved in repair of stalled replication forks. In Thermococcus kodakarensis (strain ATCC BAA-918 / JCM 12380 / KOD1) (Pyrococcus kodakaraensis (strain KOD1)), this protein is ATP-dependent DNA helicase Hel308.